Consider the following 194-residue polypeptide: Putative manganese efflux pump MntP (194 aa).

6 consecutive transmembrane segments (helical) span residues L6–L26, W35–L55, V66–A86, G109–L129, V142–L162, and R174–V194.

It belongs to the MntP (TC 9.B.29) family.

Its subcellular location is the cell membrane. Its function is as follows. Probably functions as a manganese efflux pump. In Moorella thermoacetica (strain ATCC 39073 / JCM 9320), this protein is Putative manganese efflux pump MntP.